The chain runs to 1087 residues: Collagen alpha-2(I) chain (1087 aa).

The tract at residues 1 to 931 (APDPGPGPMG…PGPAGGGYDV (931 aa)) is disordered. Low complexity-rich tracts occupy residues 83 to 120 (EPGA…AAGP), 150 to 159 (EPGPNGAVGP), and 166 to 187 (PGNN…AGAP). Residues 189-199 (FPGPRGGPGPQ) are compositionally biased toward pro residues. The span at 201–211 (PQGAAGQRGLA) shows a compositional bias: low complexity. Positions 218–227 (GVKGDGGPKG) are enriched in gly residues. 5 stretches are compositionally biased toward low complexity: residues 228–241 (EPGN…PGPQ), 278–321 (AAGP…AGPS), 335–345 (PRGQPGNLGFP), 360–384 (KGAT…TGAT), and 396–408 (QGAA…QGLP). The segment covering 409 to 418 (GPAGGAGEAG) has biased composition (gly residues). Over residues 443 to 453 (NPGAAGASGPQ) the composition is skewed to low complexity. The span at 466 to 493 (GTDGGKGEPGAAGAAGGPGHQGPGGMPG) shows a compositional bias: gly residues. The span at 504–515 (KGEKGEAGHRGP) shows a compositional bias: basic and acidic residues. Low complexity-rich tracts occupy residues 560–602 (PAGA…TGAR), 613–640 (FPGA…PAGK), and 677–695 (PGPA…LGLQ). Residues 708 to 717 (GSPGGAGAVG) are compositionally biased toward gly residues. 2 stretches are compositionally biased toward low complexity: residues 718–740 (EPGR…LGLP) and 776–788 (PGSS…AGAP). Residues 792 to 812 (GPSGGAGRGNRGESGPGGAAG) are compositionally biased toward gly residues. Low complexity predominate over residues 813–828 (AVGPAGARGAAGPSGP). Residues 829-843 (RGEKGVAGEKGERGL) are compositionally biased toward basic and acidic residues. 2 stretches are compositionally biased toward low complexity: residues 849 to 868 (LQGM…AGPN) and 897 to 909 (APGA…YVGP). Residues 910–924 (AGPPGSPGLPGPPGP) show a composition bias toward pro residues. In terms of domain architecture, Fibrillar collagen NC1 spans 929–1087 (YDVSGYDEYR…GLDLGPVCFK (159 aa)).

Belongs to the fibrillar collagen family.

It localises to the secreted. The protein resides in the extracellular space. It is found in the extracellular matrix. The chain is Collagen alpha-2(I) chain from Epinephelus costae (Goldblotch grouper).